Here is a 154-residue protein sequence, read N- to C-terminus: Superoxide dismutase [Cu-Zn] (154 aa).

The Cu cation site is built by His47, His49, and His64. A disulfide bond links Cys58 and Cys147. Zn(2+)-binding residues include His64, His72, His81, and Asp84. Residue His121 coordinates Cu cation. A substrate-binding site is contributed by Arg144.

It belongs to the Cu-Zn superoxide dismutase family. In terms of assembly, homodimer. Requires Cu cation as cofactor. The cofactor is Zn(2+).

The protein localises to the cytoplasm. The catalysed reaction is 2 superoxide + 2 H(+) = H2O2 + O2. In terms of biological role, destroys radicals which are normally produced within the cells and which are toxic to biological systems. The polypeptide is Superoxide dismutase [Cu-Zn] (SOD1) (Claviceps purpurea (strain 20.1) (Ergot fungus)).